Consider the following 396-residue polypeptide: Acetate kinase (396 aa).

Mg(2+) is bound at residue N8. K15 is a binding site for ATP. A substrate-binding site is contributed by R89. Residue D146 is the Proton donor/acceptor of the active site. ATP is bound by residues 206–210 (HIGNG), 283–285 (DMR), and 331–335 (GIGEN). E383 contacts Mg(2+).

This sequence belongs to the acetokinase family. Homodimer. The cofactor is Mg(2+). It depends on Mn(2+) as a cofactor.

It is found in the cytoplasm. The enzyme catalyses acetate + ATP = acetyl phosphate + ADP. Its pathway is metabolic intermediate biosynthesis; acetyl-CoA biosynthesis; acetyl-CoA from acetate: step 1/2. Catalyzes the formation of acetyl phosphate from acetate and ATP. Can also catalyze the reverse reaction. The chain is Acetate kinase from Streptococcus gordonii (strain Challis / ATCC 35105 / BCRC 15272 / CH1 / DL1 / V288).